Reading from the N-terminus, the 102-residue chain is RNA-binding protein Hfq (102 aa).

The 60-residue stretch at 9-68 (DPFLNALRRERVPVSIYLVNGIKLQGQIESFDQFVILLKNTVSQMVYKHAISTVVPSRPV) folds into the Sm domain. Positions 63-102 (VPSRPVSHHSNNAGGSTSSNYHHGSSAQNTSAQQDSEENE) are disordered. A compositionally biased stretch (polar residues) spans 70–96 (HHSNNAGGSTSSNYHHGSSAQNTSAQQ).

Belongs to the Hfq family. In terms of assembly, homohexamer.

In terms of biological role, RNA chaperone that binds small regulatory RNA (sRNAs) and mRNAs to facilitate mRNA translational regulation in response to envelope stress, environmental stress and changes in metabolite concentrations. Also binds with high specificity to tRNAs. The protein is RNA-binding protein Hfq of Escherichia coli O17:K52:H18 (strain UMN026 / ExPEC).